A 355-amino-acid chain; its full sequence is Uroporphyrinogen decarboxylase (355 aa).

Substrate contacts are provided by residues 27 to 31 (RQAGR), aspartate 78, tyrosine 155, threonine 210, and histidine 328.

This sequence belongs to the uroporphyrinogen decarboxylase family. Homodimer.

It is found in the cytoplasm. It carries out the reaction uroporphyrinogen III + 4 H(+) = coproporphyrinogen III + 4 CO2. It participates in porphyrin-containing compound metabolism; protoporphyrin-IX biosynthesis; coproporphyrinogen-III from 5-aminolevulinate: step 4/4. Catalyzes the decarboxylation of four acetate groups of uroporphyrinogen-III to yield coproporphyrinogen-III. This chain is Uroporphyrinogen decarboxylase, found in Pseudomonas fluorescens (strain Pf0-1).